A 481-amino-acid polypeptide reads, in one-letter code: Uridine 5'-monophosphate synthase (481 aa).

The OPRTase stretch occupies residues 1–214 (MEVASQALGP…VFSAANHNGL (214 aa)). A Phosphotyrosine modification is found at Tyr-37. Positions 215–220 (PPPEKK) are domain linker. Residues 221 to 481 (ACKELSFGAR…EAYLSRLAVQ (261 aa)) form an OMPdecase region. Ser-257 provides a ligand contact to orotidine 5'-phosphate. UMP-binding positions include Ser-257, Asp-259, and 281–283 (KTH). Residues Lys-281, Lys-314, Asp-317, Thr-321, Ser-372, 430 to 432 (QQY), and 450 to 451 (GR) each bind orotidine 5'-phosphate. Active-site for OMPdecase activity residues include Lys-314 and Asp-317. Residues Asp-317, Thr-321, Ser-372, 430–432 (QQY), and 450–451 (GR) each bind UMP.

In the N-terminal section; belongs to the purine/pyrimidine phosphoribosyltransferase family. The protein in the C-terminal section; belongs to the OMP decarboxylase family. Homodimer; dimerization is required for enzymatic activity.

The catalysed reaction is orotidine 5'-phosphate + diphosphate = orotate + 5-phospho-alpha-D-ribose 1-diphosphate. It catalyses the reaction orotidine 5'-phosphate + H(+) = UMP + CO2. It functions in the pathway pyrimidine metabolism; UMP biosynthesis via de novo pathway; UMP from orotate: step 1/2. It participates in pyrimidine metabolism; UMP biosynthesis via de novo pathway; UMP from orotate: step 2/2. Functionally, bifunctional enzyme catalyzing the last two steps of de novo pyrimidine biosynthesis, orotate phosphoribosyltransferase (OPRT), which converts orotate to orotidine-5'-monophosphate (OMP), and orotidine-5'-monophosphate decarboxylase (ODC), the terminal enzymatic reaction that decarboxylates OMP to uridine monophosphate (UMP). In Mus musculus (Mouse), this protein is Uridine 5'-monophosphate synthase (Umps).